The primary structure comprises 232 residues: MSLFNTVRKTIVPVHKEGYPFVAAFFVASLILGWIFKPLFWIGMIFTLWCAYFFRDPERVTPQDDDLVISPADGKVSAIQMVTPPAELDLGSEPMLRISVFMNVFNCHVNRAPMRGRIVSINYRSGSFVNAELDKASEDNERNGLVIETRHGQIGVVQIAGLVARRILCWANPNEPVDAGERFGLIRFGSRLDVFLPAGAAPRVSLGQVAIAGETVIAEFASTKGPIISRRS.

Catalysis depends on Ser-190, which acts as the Schiff-base intermediate with substrate; via pyruvic acid. Residue Ser-190 is modified to Pyruvic acid (Ser); by autocatalysis.

It belongs to the phosphatidylserine decarboxylase family. PSD-A subfamily. Heterodimer of a large membrane-associated beta subunit and a small pyruvoyl-containing alpha subunit. Pyruvate serves as cofactor. Post-translationally, is synthesized initially as an inactive proenzyme. Formation of the active enzyme involves a self-maturation process in which the active site pyruvoyl group is generated from an internal serine residue via an autocatalytic post-translational modification. Two non-identical subunits are generated from the proenzyme in this reaction, and the pyruvate is formed at the N-terminus of the alpha chain, which is derived from the carboxyl end of the proenzyme. The post-translation cleavage follows an unusual pathway, termed non-hydrolytic serinolysis, in which the side chain hydroxyl group of the serine supplies its oxygen atom to form the C-terminus of the beta chain, while the remainder of the serine residue undergoes an oxidative deamination to produce ammonia and the pyruvoyl prosthetic group on the alpha chain.

The protein resides in the cell membrane. The enzyme catalyses a 1,2-diacyl-sn-glycero-3-phospho-L-serine + H(+) = a 1,2-diacyl-sn-glycero-3-phosphoethanolamine + CO2. It participates in phospholipid metabolism; phosphatidylethanolamine biosynthesis; phosphatidylethanolamine from CDP-diacylglycerol: step 2/2. Catalyzes the formation of phosphatidylethanolamine (PtdEtn) from phosphatidylserine (PtdSer). The chain is Phosphatidylserine decarboxylase proenzyme from Rhizobium leguminosarum bv. trifolii (strain WSM2304).